The following is a 196-amino-acid chain: Carnitine operon protein CaiE (196 aa).

Residues 173–196 (TQPLRQMEENRPRLQGTTDVTPKR) form a disordered region. Residues 187–196 (QGTTDVTPKR) show a composition bias toward polar residues.

The protein belongs to the transferase hexapeptide repeat family.

It functions in the pathway amine and polyamine metabolism; carnitine metabolism. Its function is as follows. Overproduction of CaiE stimulates the activity of CaiB and CaiD. The protein is Carnitine operon protein CaiE of Shigella dysenteriae serotype 1 (strain Sd197).